Reading from the N-terminus, the 203-residue chain is Dephospho-CoA kinase (203 aa).

The DPCK domain maps to 6–203 (RLGITGGIAC…SLLGRGGKGG (198 aa)). An ATP-binding site is contributed by 14 to 19 (ACGKSV).

The protein belongs to the CoaE family.

The protein localises to the cytoplasm. The catalysed reaction is 3'-dephospho-CoA + ATP = ADP + CoA + H(+). It participates in cofactor biosynthesis; coenzyme A biosynthesis; CoA from (R)-pantothenate: step 5/5. In terms of biological role, catalyzes the phosphorylation of the 3'-hydroxyl group of dephosphocoenzyme A to form coenzyme A. The polypeptide is Dephospho-CoA kinase (Thermosynechococcus vestitus (strain NIES-2133 / IAM M-273 / BP-1)).